The chain runs to 368 residues: Glutamate 5-kinase (368 aa).

K13 contacts ATP. Substrate contacts are provided by S54, D141, and N153. ATP is bound at residue 173–174; the sequence is SD. One can recognise a PUA domain in the interval 278 to 355; it reads RGVITVDEGA…DEIEAILGYA (78 aa).

It belongs to the glutamate 5-kinase family.

The protein localises to the cytoplasm. It carries out the reaction L-glutamate + ATP = L-glutamyl 5-phosphate + ADP. The protein operates within amino-acid biosynthesis; L-proline biosynthesis; L-glutamate 5-semialdehyde from L-glutamate: step 1/2. Catalyzes the transfer of a phosphate group to glutamate to form L-glutamate 5-phosphate. This Ruegeria sp. (strain TM1040) (Silicibacter sp.) protein is Glutamate 5-kinase.